A 271-amino-acid chain; its full sequence is Shikimate dehydrogenase (NADP(+)) (271 aa).

Shikimate-binding positions include 16–18 (SRS) and Thr63. Catalysis depends on Lys67, which acts as the Proton acceptor. Residues Asn88 and Asp104 each coordinate shikimate. NADP(+)-binding positions include 128–132 (GAGGA), 152–157 (NRTASK), and Met215. Tyr217 contributes to the shikimate binding site. Gly238 is an NADP(+) binding site.

The protein belongs to the shikimate dehydrogenase family. Homodimer.

It carries out the reaction shikimate + NADP(+) = 3-dehydroshikimate + NADPH + H(+). The protein operates within metabolic intermediate biosynthesis; chorismate biosynthesis; chorismate from D-erythrose 4-phosphate and phosphoenolpyruvate: step 4/7. Involved in the biosynthesis of the chorismate, which leads to the biosynthesis of aromatic amino acids. Catalyzes the reversible NADPH linked reduction of 3-dehydroshikimate (DHSA) to yield shikimate (SA). This Chromohalobacter salexigens (strain ATCC BAA-138 / DSM 3043 / CIP 106854 / NCIMB 13768 / 1H11) protein is Shikimate dehydrogenase (NADP(+)).